A 357-amino-acid polypeptide reads, in one-letter code: Glutamine synthetase (357 aa).

The GS beta-grasp domain occupies 25–104; the sequence is VMAEYIWIDA…VLCETWDSDG (80 aa). The 247-residue stretch at 111–357 folds into the GS catalytic domain; that stretch reads YRHDCARLME…IIAETLCGGL (247 aa).

The protein belongs to the glutamine synthetase family. As to quaternary structure, homooctamer.

Its subcellular location is the cytoplasm. It carries out the reaction L-glutamate + NH4(+) + ATP = L-glutamine + ADP + phosphate + H(+). The sequence is that of Glutamine synthetase (glnA) from Emericella nidulans (strain FGSC A4 / ATCC 38163 / CBS 112.46 / NRRL 194 / M139) (Aspergillus nidulans).